A 266-amino-acid chain; its full sequence is Small ribosomal subunit protein mS42 (266 aa).

This sequence belongs to the mitochondrion-specific ribosomal protein mS42 family. In terms of assembly, component of the mitochondrial small ribosomal subunit (mt-SSU). Mature yeast 74S mitochondrial ribosomes consist of a small (37S) and a large (54S) subunit. The 37S small subunit contains a 15S ribosomal RNA (15S mt-rRNA) and 34 different proteins. The 54S large subunit contains a 21S rRNA (21S mt-rRNA) and 46 different proteins. mS42 forms a heterodimer with mS43, building a large protuberance adjacent to the mRNA channel exit in the mt-SSU body.

It is found in the mitochondrion. Functionally, component of the mitochondrial ribosome (mitoribosome), a dedicated translation machinery responsible for the synthesis of mitochondrial genome-encoded proteins, including at least some of the essential transmembrane subunits of the mitochondrial respiratory chain. The mitoribosomes are attached to the mitochondrial inner membrane and translation products are cotranslationally integrated into the membrane. This is Small ribosomal subunit protein mS42 (RSM26) from Saccharomyces cerevisiae (strain ATCC 204508 / S288c) (Baker's yeast).